A 304-amino-acid chain; its full sequence is UDP-N-acetylenolpyruvoylglucosamine reductase (304 aa).

Positions K28–G193 constitute an FAD-binding PCMH-type domain. R172 is an active-site residue. The Proton donor role is filled by S222. E292 is a catalytic residue.

The protein belongs to the MurB family. FAD is required as a cofactor.

Its subcellular location is the cytoplasm. The catalysed reaction is UDP-N-acetyl-alpha-D-muramate + NADP(+) = UDP-N-acetyl-3-O-(1-carboxyvinyl)-alpha-D-glucosamine + NADPH + H(+). It participates in cell wall biogenesis; peptidoglycan biosynthesis. Its function is as follows. Cell wall formation. This chain is UDP-N-acetylenolpyruvoylglucosamine reductase, found in Levilactobacillus brevis (strain ATCC 367 / BCRC 12310 / CIP 105137 / JCM 1170 / LMG 11437 / NCIMB 947 / NCTC 947) (Lactobacillus brevis).